The primary structure comprises 372 residues: N-methyl-L-tryptophan oxidase (372 aa).

4 to 34 contributes to the FAD binding site; sequence DLIIIGSGSVGAAAGYYATRAGLNVLMTDAH. Cys-308 carries the post-translational modification S-8alpha-FAD cysteine.

The protein belongs to the MSOX/MTOX family. MTOX subfamily. Monomer. FAD is required as a cofactor.

The enzyme catalyses N(alpha)-methyl-L-tryptophan + O2 + H2O = L-tryptophan + formaldehyde + H2O2. Catalyzes the oxidative demethylation of N-methyl-L-tryptophan. The chain is N-methyl-L-tryptophan oxidase from Shigella sonnei (strain Ss046).